A 143-amino-acid polypeptide reads, in one-letter code: UPF0201 protein Pars_1985 (143 aa).

It belongs to the UPF0201 family.

The protein is UPF0201 protein Pars_1985 of Pyrobaculum arsenaticum (strain DSM 13514 / JCM 11321 / PZ6).